A 976-amino-acid polypeptide reads, in one-letter code: Serine/threonine-protein kinase CLA4 (976 aa).

A disordered region spans residues Met-1 to Leu-46. Gly residues predominate over residues Ala-23–Ser-43. One can recognise a PH domain in the interval Ser-73–Pro-184. The interval Leu-207–Thr-231 is disordered. The CRIB domain occupies Val-237–Gly-250. 2 disordered regions span residues Gly-298–Pro-522 and Ser-559–Lys-658. Composition is skewed to low complexity over residues Asn-313 to Asn-332 and Leu-371 to Asn-411. The span at Ser-430–Lys-440 shows a compositional bias: polar residues. Basic and acidic residues predominate over residues Asn-441–Arg-455. Over residues Thr-456 to Gln-487 the composition is skewed to low complexity. Positions Gln-496 to Gly-505 are enriched in pro residues. The span at Ser-559 to Pro-583 shows a compositional bias: low complexity. The span at Asn-622–Asp-635 shows a compositional bias: polar residues. Positions Phe-685–Ile-940 constitute a Protein kinase domain. ATP contacts are provided by residues Ala-691–Val-699 and Lys-715. Asp-808 serves as the catalytic Proton acceptor.

Belongs to the protein kinase superfamily. STE Ser/Thr protein kinase family. STE20 subfamily. Interacts (via the CRIB domain) with CDC42.

The catalysed reaction is L-seryl-[protein] + ATP = O-phospho-L-seryl-[protein] + ADP + H(+). It catalyses the reaction L-threonyl-[protein] + ATP = O-phospho-L-threonyl-[protein] + ADP + H(+). Functionally, ser/Thr kinase required for wild-type filamentous growth, chlamydospore formation, and virulence in mouse systemic infection. This Candida albicans (strain SC5314 / ATCC MYA-2876) (Yeast) protein is Serine/threonine-protein kinase CLA4 (CLA4).